We begin with the raw amino-acid sequence, 293 residues long: Acetylglutamate kinase (293 aa).

Substrate is bound by residues 65-66, Arg87, and Asn188; that span reads GG.

This sequence belongs to the acetylglutamate kinase family. ArgB subfamily.

The protein resides in the cytoplasm. The enzyme catalyses N-acetyl-L-glutamate + ATP = N-acetyl-L-glutamyl 5-phosphate + ADP. It participates in amino-acid biosynthesis; L-arginine biosynthesis; N(2)-acetyl-L-ornithine from L-glutamate: step 2/4. In terms of biological role, catalyzes the ATP-dependent phosphorylation of N-acetyl-L-glutamate. The polypeptide is Acetylglutamate kinase (Symbiobacterium thermophilum (strain DSM 24528 / JCM 14929 / IAM 14863 / T)).